Here is a 1241-residue protein sequence, read N- to C-terminus: ATP-dependent helicase/nuclease subunit A (1241 aa).

In terms of domain architecture, UvrD-like helicase ATP-binding spans 12–485 (SQWTDDQWKA…IDLAKNFRSR (474 aa)). Position 33–40 (33–40 (AAAGSGKT)) interacts with ATP. The UvrD-like helicase C-terminal domain maps to 505–805 (GEIDYDADAE…RIMTIHKSKG (301 aa)).

It belongs to the helicase family. AddA subfamily. As to quaternary structure, heterodimer of AddA and AddB/RexB. Requires Mg(2+) as cofactor.

The enzyme catalyses Couples ATP hydrolysis with the unwinding of duplex DNA by translocating in the 3'-5' direction.. It catalyses the reaction ATP + H2O = ADP + phosphate + H(+). In terms of biological role, the heterodimer acts as both an ATP-dependent DNA helicase and an ATP-dependent, dual-direction single-stranded exonuclease. Recognizes the chi site generating a DNA molecule suitable for the initiation of homologous recombination. The AddA nuclease domain is required for chi fragment generation; this subunit has the helicase and 3' -&gt; 5' nuclease activities. This is ATP-dependent helicase/nuclease subunit A from Bacillus mycoides (strain KBAB4) (Bacillus weihenstephanensis).